Here is a 1147-residue protein sequence, read N- to C-terminus: Lon protease homolog 2, peroxisomal (1147 aa).

The Lon N-terminal domain maps to Leu-20 to Ile-348. Disordered stretches follow at residues Lys-395–Asp-444 and Lys-561–Thr-626. Residues Asp-427–Asp-444 show a composition bias toward acidic residues. Composition is skewed to basic and acidic residues over residues Lys-561–Glu-574 and Lys-582–Asp-597. Gly-651–Thr-658 contributes to the ATP binding site. A Lon proteolytic domain is found at Ser-903–Asp-1131. Catalysis depends on residues Ser-1006 and Lys-1049.

The protein belongs to the peptidase S16 family.

The protein resides in the peroxisome matrix. The enzyme catalyses Hydrolysis of proteins in presence of ATP.. Functionally, ATP-dependent serine protease that mediates the selective degradation of misfolded and unassembled polypeptides in the peroxisomal matrix. Necessary for type 2 peroxisome targeting signal (PTS2)-containing protein processing and facilitates peroxisome matrix protein import. The chain is Lon protease homolog 2, peroxisomal from Debaryomyces hansenii (strain ATCC 36239 / CBS 767 / BCRC 21394 / JCM 1990 / NBRC 0083 / IGC 2968) (Yeast).